The sequence spans 21 residues: Fibrinogen beta chain (21 aa).

Pyrrolidone carboxylic acid is present on Gln-1. A Sulfotyrosine modification is found at Tyr-6.

Heterohexamer; disulfide linked. Contains 2 sets of 3 non-identical chains (alpha, beta and gamma). The 2 heterotrimers are in head to head conformation with the N-termini in a small central domain. Post-translationally, conversion of fibrinogen to fibrin is triggered by thrombin, which cleaves fibrinopeptides A and B from alpha and beta chains, and thus exposes the N-terminal polymerization sites responsible for the formation of the soft clot.

It localises to the secreted. Cleaved by the protease thrombin to yield monomers which, together with fibrinogen alpha (FGA) and fibrinogen gamma (FGG), polymerize to form an insoluble fibrin matrix. Fibrin has a major function in hemostasis as one of the primary components of blood clots. In addition, functions during the early stages of wound repair to stabilize the lesion and guide cell migration during re-epithelialization. Was originally thought to be essential for platelet aggregation, based on in vitro studies using anticoagulated blood. However subsequent studies have shown that it is not absolutely required for thrombus formation in vivo. Enhances expression of SELP in activated platelets. Maternal fibrinogen is essential for successful pregnancy. Fibrin deposition is also associated with infection, where it protects against IFNG-mediated hemorrhage. May also facilitate the antibacterial immune response via both innate and T-cell mediated pathways. The sequence is that of Fibrinogen beta chain (FGB) from Odocoileus hemionus (Mule deer).